We begin with the raw amino-acid sequence, 217 residues long: Large ribosomal subunit protein uL1 (217 aa).

Residue Ser-2 is modified to N-acetylserine. Tyr-11 is subject to Phosphotyrosine. N6-acetyllysine is present on residues Lys-91 and Lys-106. Lys-118 carries the N6-acetyllysine; alternate modification. A Glycyl lysine isopeptide (Lys-Gly) (interchain with G-Cter in SUMO1); alternate cross-link involves residue Lys-118. Residue Lys-118 forms a Glycyl lysine isopeptide (Lys-Gly) (interchain with G-Cter in SUMO2); alternate linkage.

The protein belongs to the universal ribosomal protein uL1 family. In terms of assembly, component of the large ribosomal subunit.

The protein resides in the cytoplasm. Functionally, component of the large ribosomal subunit. The ribosome is a large ribonucleoprotein complex responsible for the synthesis of proteins in the cell. In Macaca fascicularis (Crab-eating macaque), this protein is Large ribosomal subunit protein uL1 (RPL10A).